A 475-amino-acid chain; its full sequence is UDP-glucosyltransferase UGT13248 (475 aa).

The segment covering 1 to 17 (METTVTAVSGTTSSSVG) has biased composition (low complexity). The segment at 1 to 20 (METTVTAVSGTTSSSVGHGA) is disordered. UDP-alpha-D-glucose is bound by residues histidine 38, serine 152, threonine 299, cysteine 352, 369–377 (HCGWNSTLE), and 393–394 (DQ).

The protein belongs to the UDP-glycosyltransferase family.

In terms of biological role, involved in the detoxification of the Fusarium mycotoxin deoxynivalenol by the transfer of glucose from UDP-D-glucose to the hydroxyl group at C-3, forming deoxynivalenol-3-O-beta-D-glucoside. The polypeptide is UDP-glucosyltransferase UGT13248 (Hordeum vulgare subsp. vulgare (Domesticated barley)).